The following is a 434-amino-acid chain: Probable transcription factor HMS1 (434 aa).

In terms of domain architecture, bHLH spans 266 to 341 (TGRVSHNIIE…TKSIEYICHL (76 aa)). Residues 365 to 434 (HLTEPSQPLS…DMDFNNAGDF (70 aa)) form a disordered region. Polar residues-rich tracts occupy residues 368 to 382 (EPSQPLSDNSSSEQV) and 402 to 423 (PLHNIQYNIPHQNGLMSGTNNS).

As to quaternary structure, interacts with the G1/S-specific cyclin PCL1. Post-translationally, phosphorylated by the cyclin-CDK complex PCL1-PHO85.

Its subcellular location is the nucleus. In terms of biological role, involved in exit from mitosis and pseudohyphal differentiation. This Saccharomyces cerevisiae (strain ATCC 204508 / S288c) (Baker's yeast) protein is Probable transcription factor HMS1 (HMS1).